Consider the following 213-residue polypeptide: ATP phosphoribosyltransferase (213 aa).

The protein belongs to the ATP phosphoribosyltransferase family. Short subfamily. As to quaternary structure, heteromultimer composed of HisG and HisZ subunits.

Its subcellular location is the cytoplasm. It carries out the reaction 1-(5-phospho-beta-D-ribosyl)-ATP + diphosphate = 5-phospho-alpha-D-ribose 1-diphosphate + ATP. The protein operates within amino-acid biosynthesis; L-histidine biosynthesis; L-histidine from 5-phospho-alpha-D-ribose 1-diphosphate: step 1/9. In terms of biological role, catalyzes the condensation of ATP and 5-phosphoribose 1-diphosphate to form N'-(5'-phosphoribosyl)-ATP (PR-ATP). Has a crucial role in the pathway because the rate of histidine biosynthesis seems to be controlled primarily by regulation of HisG enzymatic activity. The chain is ATP phosphoribosyltransferase (hisG) from Listeria innocua serovar 6a (strain ATCC BAA-680 / CLIP 11262).